The chain runs to 97 residues: Large ribosomal subunit protein bL28 (97 aa).

Belongs to the bacterial ribosomal protein bL28 family.

This chain is Large ribosomal subunit protein bL28, found in Rickettsia akari (strain Hartford).